A 112-amino-acid polypeptide reads, in one-letter code: Protein FAM32A (112 aa).

The segment at 23–58 (TKRKKKKKDKDKAKLLEAMGTSKKNEEEKRRGLDKR) is disordered. Over residues 45–58 (KKNEEEKRRGLDKR) the composition is skewed to basic and acidic residues.

This sequence belongs to the FAM32 family.

The protein localises to the nucleus. May induce G2 arrest and apoptosis. May also increase cell sensitivity to apoptotic stimuli. This is Protein FAM32A (FAM32A) from Bos taurus (Bovine).